The following is a 474-amino-acid chain: Chromosomal replication initiator protein DnaA (474 aa).

Residues 1–90 are domain I, interacts with DnaA modulators; that stretch reads MSSSLWLQCL…RQVVVPSSQI (90 aa). The domain II stretch occupies residues 91-137; it reads IAPAAPAVTLAPRPLPATRILQDDAPSRSWEPAPSPVQPESKSGYRS. A disordered region spans residues 112-137; it reads QDDAPSRSWEPAPSPVQPESKSGYRS. Residues 128–137 show a composition bias toward polar residues; sequence QPESKSGYRS. The domain III, AAA+ region stretch occupies residues 138–354; the sequence is NVNPKHNFNN…GALNRVIANA (217 aa). Gly182, Gly184, Lys185, and Thr186 together coordinate ATP. The segment at 355–474 is domain IV, binds dsDNA; it reads NFTGRAITID…YSNLIRTLST (120 aa).

Belongs to the DnaA family. In terms of assembly, oligomerizes as a right-handed, spiral filament on DNA at oriC.

It is found in the cytoplasm. Functionally, plays an essential role in the initiation and regulation of chromosomal replication. ATP-DnaA binds to the origin of replication (oriC) to initiate formation of the DNA replication initiation complex once per cell cycle. Binds the DnaA box (a 9 base pair repeat at the origin) and separates the double-stranded (ds)DNA. Forms a right-handed helical filament on oriC DNA; dsDNA binds to the exterior of the filament while single-stranded (ss)DNA is stabiized in the filament's interior. The ATP-DnaA-oriC complex binds and stabilizes one strand of the AT-rich DNA unwinding element (DUE), permitting loading of DNA polymerase. After initiation quickly degrades to an ADP-DnaA complex that is not apt for DNA replication. Binds acidic phospholipids. This chain is Chromosomal replication initiator protein DnaA, found in Photobacterium profundum (strain SS9).